Consider the following 28-residue polypeptide: GIMDTIKDTAKTVAVGLLNKLKCKITGC.

Cys-23 and Cys-28 are joined by a disulfide.

Expressed by the skin glands.

It is found in the secreted. In terms of biological role, mast cell degranulating peptide. Causes histamine release from rat peritoneal mast cells in vitro. Has antibacterial activity against the Gram-negative bacterium E.coli K12 and Gram-positive bacterium M.luteus NCT C2665. This is Ranatuerin-2SEc from Lithobates sevosus (Dusky gopher frog).